The sequence spans 52 residues: UPF0181 protein NTHI1697 (52 aa).

This sequence belongs to the UPF0181 family.

The sequence is that of UPF0181 protein NTHI1697 from Haemophilus influenzae (strain 86-028NP).